Here is a 675-residue protein sequence, read N- to C-terminus: Methionine--tRNA ligase (675 aa).

The 'HIGH' region signature appears at 15–25 (PYANGSIHLGH). Zn(2+) contacts are provided by cysteine 146, cysteine 149, cysteine 159, and cysteine 162. Positions 332-336 (KMSKS) match the 'KMSKS' region motif. Lysine 335 provides a ligand contact to ATP. The tRNA-binding domain occupies 573 to 675 (DFAKVDMRIA…SGAQPGMQVK (103 aa)).

Belongs to the class-I aminoacyl-tRNA synthetase family. MetG type 1 subfamily. In terms of assembly, homodimer. Requires Zn(2+) as cofactor.

Its subcellular location is the cytoplasm. The enzyme catalyses tRNA(Met) + L-methionine + ATP = L-methionyl-tRNA(Met) + AMP + diphosphate. In terms of biological role, is required not only for elongation of protein synthesis but also for the initiation of all mRNA translation through initiator tRNA(fMet) aminoacylation. This is Methionine--tRNA ligase from Yersinia pestis bv. Antiqua (strain Angola).